A 618-amino-acid polypeptide reads, in one-letter code: UvrABC system protein C (618 aa).

Residues 20 to 98 enclose the GIY-YIG domain; sequence TAPGVYRMYA…IKSLSPRYNV (79 aa). Residues 207 to 242 form the UVR domain; that stretch reads DQLGEEIMQSMQQASEALEFERAARLRDLLSSLRSM.

Belongs to the UvrC family. Interacts with UvrB in an incision complex.

Its subcellular location is the cytoplasm. The UvrABC repair system catalyzes the recognition and processing of DNA lesions. UvrC both incises the 5' and 3' sides of the lesion. The N-terminal half is responsible for the 3' incision and the C-terminal half is responsible for the 5' incision. The chain is UvrABC system protein C from Xanthomonas oryzae pv. oryzae (strain MAFF 311018).